The chain runs to 228 residues: 7-cyano-7-deazaguanine synthase (228 aa).

An ATP-binding site is contributed by 9–19 (LSGGPDSTTVL). C193, C203, C206, and C209 together coordinate Zn(2+).

The protein belongs to the QueC family. The cofactor is Zn(2+).

The enzyme catalyses 7-carboxy-7-deazaguanine + NH4(+) + ATP = 7-cyano-7-deazaguanine + ADP + phosphate + H2O + H(+). It functions in the pathway purine metabolism; 7-cyano-7-deazaguanine biosynthesis. Catalyzes the ATP-dependent conversion of 7-carboxy-7-deazaguanine (CDG) to 7-cyano-7-deazaguanine (preQ(0)). This is 7-cyano-7-deazaguanine synthase from Rickettsia conorii (strain ATCC VR-613 / Malish 7).